The primary structure comprises 360 residues: Chorismate synthase (360 aa).

NADP(+) contacts are provided by Arg-48 and Arg-54. FMN-binding positions include 125-127, 246-247, Gly-286, 301-305, and Arg-327; these read RSS, NA, and KPTSS.

The protein belongs to the chorismate synthase family. Homotetramer. It depends on FMNH2 as a cofactor.

The enzyme catalyses 5-O-(1-carboxyvinyl)-3-phosphoshikimate = chorismate + phosphate. Its pathway is metabolic intermediate biosynthesis; chorismate biosynthesis; chorismate from D-erythrose 4-phosphate and phosphoenolpyruvate: step 7/7. In terms of biological role, catalyzes the anti-1,4-elimination of the C-3 phosphate and the C-6 proR hydrogen from 5-enolpyruvylshikimate-3-phosphate (EPSP) to yield chorismate, which is the branch point compound that serves as the starting substrate for the three terminal pathways of aromatic amino acid biosynthesis. This reaction introduces a second double bond into the aromatic ring system. The protein is Chorismate synthase of Glaesserella parasuis serovar 5 (strain SH0165) (Haemophilus parasuis).